Reading from the N-terminus, the 156-residue chain is Cyclic pyranopterin monophosphate synthase (156 aa).

Substrate is bound by residues 73–75 and 110–111; these read LCH and ME. D125 is an active-site residue.

Belongs to the MoaC family. In terms of assembly, homohexamer; trimer of dimers.

The catalysed reaction is (8S)-3',8-cyclo-7,8-dihydroguanosine 5'-triphosphate = cyclic pyranopterin phosphate + diphosphate. Its pathway is cofactor biosynthesis; molybdopterin biosynthesis. Its function is as follows. Catalyzes the conversion of (8S)-3',8-cyclo-7,8-dihydroguanosine 5'-triphosphate to cyclic pyranopterin monophosphate (cPMP). The protein is Cyclic pyranopterin monophosphate synthase of Stutzerimonas stutzeri (strain A1501) (Pseudomonas stutzeri).